A 104-amino-acid polypeptide reads, in one-letter code: ATP-dependent Clp protease adapter protein ClpS (104 aa).

It belongs to the ClpS family. In terms of assembly, binds to the N-terminal domain of the chaperone ClpA.

Its function is as follows. Involved in the modulation of the specificity of the ClpAP-mediated ATP-dependent protein degradation. In Bordetella avium (strain 197N), this protein is ATP-dependent Clp protease adapter protein ClpS.